The following is a 414-amino-acid chain: Glucose-1-phosphate adenylyltransferase (414 aa).

Alpha-D-glucose 1-phosphate-binding positions include Y103, G168, 183–184 (EK), and S201.

This sequence belongs to the bacterial/plant glucose-1-phosphate adenylyltransferase family. As to quaternary structure, homotetramer.

The enzyme catalyses alpha-D-glucose 1-phosphate + ATP + H(+) = ADP-alpha-D-glucose + diphosphate. Its pathway is glycan biosynthesis; glycogen biosynthesis. In terms of biological role, involved in the biosynthesis of ADP-glucose, a building block required for the elongation reactions to produce glycogen. Catalyzes the reaction between ATP and alpha-D-glucose 1-phosphate (G1P) to produce pyrophosphate and ADP-Glc. The protein is Glucose-1-phosphate adenylyltransferase of Thermus caldophilus.